The chain runs to 75 residues: Large ribosomal subunit protein bL31 (75 aa).

It belongs to the bacterial ribosomal protein bL31 family. Type A subfamily. As to quaternary structure, part of the 50S ribosomal subunit.

Binds the 23S rRNA. This chain is Large ribosomal subunit protein bL31, found in Pelodictyon phaeoclathratiforme (strain DSM 5477 / BU-1).